The following is a 119-amino-acid chain: Immunity protein WapI (119 aa).

Functionally, immunity protein component of a toxin-immunity protein module, which functions as a cellular contact-dependent growth inhibition (CDI) system. Neutralizes the tRNase activity of cognate toxin WapA upon expression in E.coli. Does not inhibit WapA from other strains of B.subtilis. The WapA C-terminus cannot be expressed on its own in E.coli, however it can be cloned in the presence of its cognate immunity protein gene. Cell contact is probably necessary for growth inhibition. The chain is Immunity protein WapI (wapI) from Bacillus subtilis subsp. natto (strain BEST195).